The chain runs to 478 residues: tRNA modification GTPase MnmE (478 aa).

(6S)-5-formyl-5,6,7,8-tetrahydrofolate contacts are provided by Arg-25, Glu-82, and Lys-135. Residues 231–400 (GIKVVIAGQP…LRQRLLQVVG (170 aa)) enclose the TrmE-type G domain. A K(+)-binding site is contributed by Asn-241. GTP contacts are provided by residues 241-246 (NAGKSS), 260-266 (TPIAGTT), and 285-288 (DTAG). Residue Ser-245 coordinates Mg(2+). 3 residues coordinate K(+): Thr-260, Ile-262, and Thr-265. Thr-266 is a binding site for Mg(2+). Residue Lys-478 participates in (6S)-5-formyl-5,6,7,8-tetrahydrofolate binding.

This sequence belongs to the TRAFAC class TrmE-Era-EngA-EngB-Septin-like GTPase superfamily. TrmE GTPase family. As to quaternary structure, homodimer. Heterotetramer of two MnmE and two MnmG subunits. The cofactor is K(+).

The protein localises to the cytoplasm. Exhibits a very high intrinsic GTPase hydrolysis rate. Involved in the addition of a carboxymethylaminomethyl (cmnm) group at the wobble position (U34) of certain tRNAs, forming tRNA-cmnm(5)s(2)U34. The polypeptide is tRNA modification GTPase MnmE (Polaromonas sp. (strain JS666 / ATCC BAA-500)).